Here is a 563-residue protein sequence, read N- to C-terminus: MNNSSELIAAINGFRNSGRFCDINIVINDERINAHRLILSGASEYFSILFSSDFIDSNEYEVNLSHLDYQSVNDLIDYIYGIPLSLTNDSVKYILSTADFLQIGSAITECENYILKNLCSRNCIDFYIYADKYNNKKIETASFNTILRNILRLINDENFKYLTEESMIKILSDDMLNIKNEDFAPLILIKWLESTQQPCTVELLRCLRISLLSPQVIKSLYSHRLVSSIYECITFLNNIAFLDESFPRYNSIELISIGISNSRDKISINCYNRKKNTWEMISSRGYRCSFAVAVMDNIIYMMGGYDQSPYRSSKVIAYNTCTNSWIYDIPELKYPRSNCGGVVDDEYIYCIGGIRDQDSSLISDIDRWKPSKPYWQTYAKMREPKCDMGVAMLNGLIYVIGGVVKGGTCTDTLESLSEDGWMMHRRLPIKMSNMSTIVHAGKIYISGGYTNSSIVNEISNLVLSYNPIYDEWTKLSSLNIPRINPALWSVHNKLYVGGISDDVQTNTSETYDKEKDCWTLDNGHVLPYNYIMYKCEPIKHKYPLEKIQYTNDFLKCLESFIGS.

Residues 21 to 88 (CDINIVINDE…IYGIPLSLTN (68 aa)) enclose the BTB domain. Residues 123 to 219 (CIDFYIYADK…SLLSPQVIKS (97 aa)) enclose the BACK domain. 6 Kelch repeats span residues 252–297 (IELI…VMDN), 298–346 (IIYM…VDDE), 347–395 (YIYC…MLNG), 397–441 (IYVI…VHAG), 442–492 (KIYI…SVHN), and 494–540 (LYVG…PIKH).

In terms of assembly, interacts (via BTB domain) with host CUL3.

The protein resides in the host cytoplasm. Its function is as follows. Probable substrate-specific adapter of CUL3-containing E3 ubiquitin-protein ligases which mediate the ubiquitination and subsequent proteasomal degradation of host target proteins. This is Kelch repeat and BTB domain-containing protein 1 (KBTB1) from Mus musculus (Mouse).